We begin with the raw amino-acid sequence, 71 residues long: Small ribosomal subunit protein bS21 (71 aa).

The segment at 40 to 71 is disordered; the sequence is KPTQVRKRKQAAAVKRHMKRLNREQQRRQRPY. Basic residues predominate over residues 43-59; it reads QVRKRKQAAAVKRHMKR. The segment covering 60-71 has biased composition (basic and acidic residues); that stretch reads LNREQQRRQRPY.

Belongs to the bacterial ribosomal protein bS21 family.

This is Small ribosomal subunit protein bS21 from Halorhodospira halophila (strain DSM 244 / SL1) (Ectothiorhodospira halophila (strain DSM 244 / SL1)).